The chain runs to 131 residues: UPF0251 protein MMP0619 (131 aa).

This sequence belongs to the UPF0251 family.

In Methanococcus maripaludis (strain DSM 14266 / JCM 13030 / NBRC 101832 / S2 / LL), this protein is UPF0251 protein MMP0619.